The following is a 311-amino-acid chain: Glutaminase (311 aa).

Ser66, Asn116, Glu162, Asn169, Tyr193, Tyr245, and Val263 together coordinate substrate.

Belongs to the glutaminase family. Homotetramer.

It carries out the reaction L-glutamine + H2O = L-glutamate + NH4(+). The sequence is that of Glutaminase from Rhodopseudomonas palustris (strain ATCC BAA-98 / CGA009).